A 131-amino-acid chain; its full sequence is Maturin (131 aa).

Residue tyrosine 34 is modified to Phosphotyrosine. Residues 107 to 120 (FEEYSADVEEEEPE) are compositionally biased toward acidic residues. A disordered region spans residues 107–131 (FEEYSADVEEEEPEADHPQMGVSQQ).

It belongs to the MTURN family. In terms of processing, phosphorylation at Tyr-34 is essential for its ability to promote megakaryocyte differentiation. In terms of tissue distribution, expressed in the thymus, bone marrow and spleen.

It is found in the cytoplasm. Functionally, promotes megakaryocyte differentiation by enhancing ERK and JNK signaling as well as up-regulating RUNX1 and FLI1 expression. Represses NF-kappa-B transcriptional activity by inhibiting phosphorylation of RELA at 'Ser- 536'. May be involved in early neuronal development. In Mus musculus (Mouse), this protein is Maturin (Mturn).